The primary structure comprises 310 residues: Ribosomal RNA small subunit methyltransferase H (310 aa).

S-adenosyl-L-methionine-binding positions include 32–34, aspartate 52, phenylalanine 79, aspartate 100, and glutamine 107; that span reads AGH.

This sequence belongs to the methyltransferase superfamily. RsmH family.

It localises to the cytoplasm. It catalyses the reaction cytidine(1402) in 16S rRNA + S-adenosyl-L-methionine = N(4)-methylcytidine(1402) in 16S rRNA + S-adenosyl-L-homocysteine + H(+). In terms of biological role, specifically methylates the N4 position of cytidine in position 1402 (C1402) of 16S rRNA. This is Ribosomal RNA small subunit methyltransferase H from Halalkalibacterium halodurans (strain ATCC BAA-125 / DSM 18197 / FERM 7344 / JCM 9153 / C-125) (Bacillus halodurans).